Here is a 570-residue protein sequence, read N- to C-terminus: Urease subunit alpha (570 aa).

The Urease domain occupies 131 to 570; that stretch reads GGVDTHIHFI…LPMAQRYFLF (440 aa). Positions 136, 138, and 219 each coordinate Ni(2+). Lys219 bears the N6-carboxylysine mark. Substrate is bound at residue His221. Positions 248 and 274 each coordinate Ni(2+). His322 (proton donor) is an active-site residue. Asp362 serves as a coordination point for Ni(2+).

Belongs to the metallo-dependent hydrolases superfamily. Urease alpha subunit family. In terms of assembly, heterotrimer of UreA (gamma), UreB (beta) and UreC (alpha) subunits. Three heterotrimers associate to form the active enzyme. Ni cation serves as cofactor. In terms of processing, carboxylation allows a single lysine to coordinate two nickel ions.

The protein resides in the cytoplasm. It carries out the reaction urea + 2 H2O + H(+) = hydrogencarbonate + 2 NH4(+). It functions in the pathway nitrogen metabolism; urea degradation; CO(2) and NH(3) from urea (urease route): step 1/1. The polypeptide is Urease subunit alpha (Methylocella silvestris (strain DSM 15510 / CIP 108128 / LMG 27833 / NCIMB 13906 / BL2)).